The primary structure comprises 662 residues: UvrABC system protein B (662 aa).

Residues 25–182 (KGIEKREKFQ…KKLVEIQYER (158 aa)) form the Helicase ATP-binding domain. 38–45 (GVTGSGKT) provides a ligand contact to ATP. Positions 91–114 (YYDYYQPEAYVAQSDTYIEKDASI) match the Beta-hairpin motif. The Helicase C-terminal domain maps to 429-595 (QIDDLYTSIQ…TIIKDIREVI (167 aa)). The 36-residue stretch at 622-657 (DKLIEKYEEEMKEAAQNLQFEKAAHLRDVIYKLKKD) folds into the UVR domain.

This sequence belongs to the UvrB family. Forms a heterotetramer with UvrA during the search for lesions. Interacts with UvrC in an incision complex.

Its subcellular location is the cytoplasm. In terms of biological role, the UvrABC repair system catalyzes the recognition and processing of DNA lesions. A damage recognition complex composed of 2 UvrA and 2 UvrB subunits scans DNA for abnormalities. Upon binding of the UvrA(2)B(2) complex to a putative damaged site, the DNA wraps around one UvrB monomer. DNA wrap is dependent on ATP binding by UvrB and probably causes local melting of the DNA helix, facilitating insertion of UvrB beta-hairpin between the DNA strands. Then UvrB probes one DNA strand for the presence of a lesion. If a lesion is found the UvrA subunits dissociate and the UvrB-DNA preincision complex is formed. This complex is subsequently bound by UvrC and the second UvrB is released. If no lesion is found, the DNA wraps around the other UvrB subunit that will check the other stand for damage. This is UvrABC system protein B from Clostridium botulinum (strain Kyoto / Type A2).